A 152-amino-acid polypeptide reads, in one-letter code: Ribosome maturation factor RimP (152 aa).

It belongs to the RimP family.

It localises to the cytoplasm. Required for maturation of 30S ribosomal subunits. This Desulfitobacterium hafniense (strain Y51) protein is Ribosome maturation factor RimP.